Here is a 169-residue protein sequence, read N- to C-terminus: General odorant-binding protein 57a (169 aa).

Positions 1–20 are cleaved as a signal peptide; it reads MFNTRLAIFLLLIVVSLSQA. Cystine bridges form between Cys-39–Cys-77, Cys-73–Cys-120, and Cys-111–Cys-129.

It belongs to the PBP/GOBP family.

In terms of biological role, present in the aqueous fluid surrounding olfactory sensory dendrites and are thought to aid in the capture and transport of hydrophobic odorants into and through this fluid. The sequence is that of General odorant-binding protein 57a from Drosophila melanogaster (Fruit fly).